A 112-amino-acid chain; its full sequence is Ig kappa chain V-III region TEPC 124 (112 aa).

Residues 1–23 (DIVLTQSPASLAVSLGQRATISC) are framework-1. Cysteine 23 and cysteine 92 are joined by a disulfide. Residues 24-38 (RASZSVNWYGNSFMZ) are complementarity-determining-1. Positions 39-53 (WYZZKPGZPPKLLIY) are framework-2. Residues 54 to 60 (RASNLZS) are complementarity-determining-2. A framework-3 region spans residues 61-92 (GIPARFSGSGSRTBFTLTIBPVZABDVATYFC). The interval 93-101 (ZZSBZAPWT) is complementarity-determining-3. A framework-4 region spans residues 102–111 (FGSGTKLEIK).

The protein is Ig kappa chain V-III region TEPC 124 of Mus musculus (Mouse).